Reading from the N-terminus, the 102-residue chain is MPGQKIRIRLKAYDHKLLDESAKKIVEIVKQTNAKVSGPIPLPTERTLYVVLRSPLKHKDSREQFEKRIHKRLIDILEPSPKTIDALMKINLPAGVDVEINL.

Belongs to the universal ribosomal protein uS10 family. Part of the 30S ribosomal subunit.

Its function is as follows. Involved in the binding of tRNA to the ribosomes. This is Small ribosomal subunit protein uS10 from Thermosipho africanus (strain TCF52B).